A 252-amino-acid polypeptide reads, in one-letter code: 2-succinyl-6-hydroxy-2,4-cyclohexadiene-1-carboxylate synthase (252 aa).

The protein belongs to the AB hydrolase superfamily. MenH family. In terms of assembly, monomer.

It catalyses the reaction 5-enolpyruvoyl-6-hydroxy-2-succinyl-cyclohex-3-ene-1-carboxylate = (1R,6R)-6-hydroxy-2-succinyl-cyclohexa-2,4-diene-1-carboxylate + pyruvate. Its pathway is quinol/quinone metabolism; 1,4-dihydroxy-2-naphthoate biosynthesis; 1,4-dihydroxy-2-naphthoate from chorismate: step 3/7. It participates in quinol/quinone metabolism; menaquinone biosynthesis. Functionally, catalyzes a proton abstraction reaction that results in 2,5-elimination of pyruvate from 2-succinyl-5-enolpyruvyl-6-hydroxy-3-cyclohexene-1-carboxylate (SEPHCHC) and the formation of 2-succinyl-6-hydroxy-2,4-cyclohexadiene-1-carboxylate (SHCHC). The protein is 2-succinyl-6-hydroxy-2,4-cyclohexadiene-1-carboxylate synthase of Shigella flexneri serotype 5b (strain 8401).